The sequence spans 128 residues: Transcription antitermination protein NusB (128 aa).

The protein belongs to the NusB family.

Involved in transcription antitermination. Required for transcription of ribosomal RNA (rRNA) genes. Binds specifically to the boxA antiterminator sequence of the ribosomal RNA (rrn) operons. This Staphylococcus haemolyticus (strain JCSC1435) protein is Transcription antitermination protein NusB.